The following is a 471-amino-acid chain: Trigger factor (471 aa).

The PPIase FKBP-type domain occupies 166–245 (DDFITIDINA…LTAVKVRELP (80 aa)). The disordered stretch occupies residues 442–471 (AAGVTGEDDDTEAEEERVTVSADDPGAARF). Positions 447–456 (GEDDDTEAEE) are enriched in acidic residues.

The protein belongs to the FKBP-type PPIase family. Tig subfamily.

It is found in the cytoplasm. The catalysed reaction is [protein]-peptidylproline (omega=180) = [protein]-peptidylproline (omega=0). Its function is as follows. Involved in protein export. Acts as a chaperone by maintaining the newly synthesized protein in an open conformation. Functions as a peptidyl-prolyl cis-trans isomerase. This is Trigger factor from Renibacterium salmoninarum (strain ATCC 33209 / DSM 20767 / JCM 11484 / NBRC 15589 / NCIMB 2235).